We begin with the raw amino-acid sequence, 374 residues long: Cell division protein DivIB (374 aa).

The interval 1–90 is disordered; the sequence is MWKISNENDI…EEEHFADRLP (90 aa). Residues 1 to 103 are Cytoplasmic-facing; that stretch reads MWKISNENDI…KTRNKRLYRR (103 aa). Positions 39–53 are enriched in basic and acidic residues; it reads YLKKQAEEAASKGEN. The segment covering 56–75 has biased composition (polar residues); that stretch reads AEVTITLQEQSQEEPQQHLP. Residues 104–124 form a helical membrane-spanning segment; that stretch reads LAFILTCLGTAILVALYFVSP. Residues 125–374 lie on the Extracellular side of the membrane; that stretch reads LSRLSEVTVS…GENQEVQQAE (250 aa). Residues 126–197 enclose the POTRA domain; it reads SRLSEVTVSG…NSFKIDIQEY (72 aa). The tract at residues 325 to 374 is disordered; sequence KESEETGSEVSEDSAVENQEVVDPNAGVATDEANNGTPTNGENQEVQQAE. Residues 326–339 show a composition bias toward acidic residues; it reads ESEETGSEVSEDSA. Over residues 356-374 the composition is skewed to polar residues; that stretch reads EANNGTPTNGENQEVQQAE.

Belongs to the FtsQ/DivIB family. DivIB subfamily.

It is found in the cell membrane. Cell division protein that may be involved in stabilizing or promoting the assembly of the division complex. This is Cell division protein DivIB from Enterococcus faecalis (strain ATCC 700802 / V583).